The primary structure comprises 165 residues: Endoribonuclease YbeY (165 aa).

Zn(2+)-binding residues include histidine 130, histidine 134, and histidine 140.

It belongs to the endoribonuclease YbeY family. Zn(2+) is required as a cofactor.

Its subcellular location is the cytoplasm. Functionally, single strand-specific metallo-endoribonuclease involved in late-stage 70S ribosome quality control and in maturation of the 3' terminus of the 16S rRNA. This is Endoribonuclease YbeY from Streptococcus suis (strain 98HAH33).